The following is a 295-amino-acid chain: Sulfotransferase 1E1 (295 aa).

A 3'-phosphoadenylyl sulfate-binding site is contributed by 48 to 53 (KSGSTW). A substrate-binding site is contributed by 106–108 (KTH). H108 (proton acceptor) is an active-site residue. 2 residues coordinate 3'-phosphoadenylyl sulfate: R130 and S138. At S156 the chain carries Phosphoserine. Residues Y193, 227–232 (TSFQEM), and 257–259 (RKG) contribute to the 3'-phosphoadenylyl sulfate site.

Belongs to the sulfotransferase 1 family. As to quaternary structure, homodimer. As to expression, liver of young mature males and uterus.

The protein resides in the cytoplasm. Its subcellular location is the cytosol. The catalysed reaction is estrone + 3'-phosphoadenylyl sulfate = estrone 3-sulfate + adenosine 3',5'-bisphosphate + H(+). The enzyme catalyses (24S)-hydroxycholesterol + 3'-phosphoadenylyl sulfate = (24S)-hydroxycholesterol 3-sulfate + adenosine 3',5'-bisphosphate + H(+). It catalyses the reaction 17beta-estradiol + 3'-phosphoadenylyl sulfate = 17beta-estradiol 3-sulfate + adenosine 3',5'-bisphosphate + H(+). It carries out the reaction 3beta-hydroxyandrost-5-en-17-one + 3'-phosphoadenylyl sulfate = dehydroepiandrosterone 3-sulfate + adenosine 3',5'-bisphosphate + H(+). The catalysed reaction is 4-ethylphenol + 3'-phosphoadenylyl sulfate = 4-ethylphenyl sulfate + adenosine 3',5'-bisphosphate + H(+). Inhibited by estradiol. In terms of biological role, sulfotransferase that utilizes 3'-phospho-5'-adenylyl sulfate (PAPS) as sulfonate donor to catalyze the sulfate conjugation of estradiol and estrone. Is a key enzyme in estrogen homeostasis, the sulfation of estrogens leads to their inactivation. Also sulfates dehydroepiandrosterone (DHEA), pregnenolone, (24S)-hydroxycholesterol and xenobiotic compounds like ethinylestradiol, equalenin, diethyl stilbesterol and 1-naphthol at significantly lower efficiency. Does not sulfonate cortisol, testosterone and dopamine. May play a role in gut microbiota-host metabolic interaction. O-sulfonates 4-ethylphenol (4-EP), a dietary tyrosine-derived metabolite produced by gut bacteria. The product 4-EPS crosses the blood-brain barrier and may negatively regulate oligodendrocyte maturation and myelination, affecting the functional connectivity of different brain regions associated with the limbic system. The polypeptide is Sulfotransferase 1E1 (Rattus norvegicus (Rat)).